Here is a 186-residue protein sequence, read N- to C-terminus: Lipid A palmitoyltransferase PagP (186 aa).

The N-terminal stretch at 1 to 25 is a signal peptide; the sequence is MKVSKYVAIFFFVFIQLISVGKVFA. Active-site residues include His58, Asp101, and Ser102.

Belongs to the lipid A palmitoyltransferase family. In terms of assembly, homodimer.

It localises to the cell outer membrane. It carries out the reaction lipid A (E. coli) + a 1-hexadecanoyl-2-acyl-sn-glycero-3-phosphocholine = hepta-acyl lipid A (E. coli) + a 2-acyl-sn-glycero-3-phosphocholine. It catalyses the reaction lipid IIA + a 1-hexadecanoyl-2-acyl-sn-glycero-3-phosphocholine = lipid IIB + a 2-acyl-sn-glycero-3-phosphocholine. The enzyme catalyses lipid IVA (E. coli) + a 1-hexadecanoyl-2-acyl-sn-glycero-3-phosphocholine = lipid IVB (E. coli) + a 2-acyl-sn-glycero-3-phosphocholine. In terms of biological role, transfers a palmitate residue from the sn-1 position of a phospholipid to the N-linked hydroxymyristate on the proximal unit of lipid A or its precursors. This chain is Lipid A palmitoyltransferase PagP, found in Escherichia coli O6:K15:H31 (strain 536 / UPEC).